Here is a 33-residue protein sequence, read N- to C-terminus: pyr operon leader peptide (33 aa).

In Salmonella typhi, this protein is pyr operon leader peptide (pyrL).